A 333-amino-acid polypeptide reads, in one-letter code: Casein kinase II subunit alpha-3 (333 aa).

The Protein kinase domain occupies 34-319 (YEVVRKVGRG…AREAMDHPYF (286 aa)). ATP contacts are provided by residues 40–48 (VGRGKYSEV) and lysine 63. Aspartate 151 functions as the Proton acceptor in the catalytic mechanism.

This sequence belongs to the protein kinase superfamily. Ser/Thr protein kinase family. CK2 subfamily. As to quaternary structure, heterotetramer of two catalytic alpha subunits and two regulatory beta subunits.

It is found in the nucleus. The protein localises to the nucleolus. Its subcellular location is the cytoplasm. The enzyme catalyses L-seryl-[protein] + ATP = O-phospho-L-seryl-[protein] + ADP + H(+). It carries out the reaction L-threonyl-[protein] + ATP = O-phospho-L-threonyl-[protein] + ADP + H(+). In terms of biological role, casein kinases are operationally defined by their preferential utilization of acidic proteins such as caseins as substrates. The alpha chain contains the catalytic site. The tetrameric holoenzyme CK2 is composed of two alpha and two beta subunits. Acts as a circadian clock component that maintains the correct period length through phosphorylation of CCA1. The polypeptide is Casein kinase II subunit alpha-3 (Arabidopsis thaliana (Mouse-ear cress)).